Here is a 124-residue protein sequence, read N- to C-terminus: Fluoride-specific ion channel FluC (124 aa).

The next 4 helical transmembrane spans lie at 4–24 (LLFV…MSII), 35–55 (FGTL…YALG), 62–82 (PELK…FSTF), and 95–115 (WFKS…MVYL). Na(+)-binding residues include glycine 74 and threonine 77.

The protein belongs to the fluoride channel Fluc/FEX (TC 1.A.43) family.

Its subcellular location is the cell inner membrane. It carries out the reaction fluoride(in) = fluoride(out). Na(+) is not transported, but it plays an essential structural role and its presence is essential for fluoride channel function. In terms of biological role, fluoride-specific ion channel. Important for reducing fluoride concentration in the cell, thus reducing its toxicity. The polypeptide is Fluoride-specific ion channel FluC (Shewanella denitrificans (strain OS217 / ATCC BAA-1090 / DSM 15013)).